The chain runs to 206 residues: FMN-dependent NADH:quinone oxidoreductase 1 (206 aa).

Residues Ser9, 15–17 (SVS), and 139–142 (SRGG) contribute to the FMN site.

The protein belongs to the azoreductase type 1 family. In terms of assembly, homodimer. The cofactor is FMN.

It catalyses the reaction 2 a quinone + NADH + H(+) = 2 a 1,4-benzosemiquinone + NAD(+). It carries out the reaction N,N-dimethyl-1,4-phenylenediamine + anthranilate + 2 NAD(+) = 2-(4-dimethylaminophenyl)diazenylbenzoate + 2 NADH + 2 H(+). Quinone reductase that provides resistance to thiol-specific stress caused by electrophilic quinones. Functionally, also exhibits azoreductase activity. Catalyzes the reductive cleavage of the azo bond in aromatic azo compounds to the corresponding amines. The polypeptide is FMN-dependent NADH:quinone oxidoreductase 1 (Cupriavidus pinatubonensis (strain JMP 134 / LMG 1197) (Cupriavidus necator (strain JMP 134))).